Consider the following 589-residue polypeptide: Aspartate--tRNA ligase 2 (589 aa).

Residue Glu-174 coordinates L-aspartate. The segment at 198–201 is aspartate; that stretch reads QITK. Position 220 (Arg-220) interacts with L-aspartate. ATP contacts are provided by residues 220-222 and Gln-229; that span reads RDE. His-443 is a binding site for L-aspartate. Glu-477 serves as a coordination point for ATP. Residue Arg-484 coordinates L-aspartate. 529-532 provides a ligand contact to ATP; that stretch reads GLDR.

The protein belongs to the class-II aminoacyl-tRNA synthetase family. Type 1 subfamily. Homodimer.

The protein localises to the cytoplasm. The enzyme catalyses tRNA(Asp) + L-aspartate + ATP = L-aspartyl-tRNA(Asp) + AMP + diphosphate. Its function is as follows. Catalyzes the attachment of L-aspartate to tRNA(Asp) in a two-step reaction: L-aspartate is first activated by ATP to form Asp-AMP and then transferred to the acceptor end of tRNA(Asp). The polypeptide is Aspartate--tRNA ligase 2 (Streptococcus mutans serotype c (strain ATCC 700610 / UA159)).